A 351-amino-acid chain; its full sequence is Xaa-Pro dipeptidase (351 aa).

Residues Asp212, Asp223, His287, Glu316, and Glu330 each coordinate Co(2+).

It belongs to the peptidase M24B family. Archaeal-type prolidase subfamily. In terms of assembly, homodimer. It depends on Co(2+) as a cofactor.

Its subcellular location is the cytoplasm. It catalyses the reaction Xaa-L-Pro dipeptide + H2O = an L-alpha-amino acid + L-proline. Its function is as follows. Splits dipeptides with a prolyl in the C-terminal position and a nonpolar amino acid at the N-terminal position. The polypeptide is Xaa-Pro dipeptidase (pepQ) (Pyrococcus horikoshii (strain ATCC 700860 / DSM 12428 / JCM 9974 / NBRC 100139 / OT-3)).